Consider the following 316-residue polypeptide: 4-hydroxy-3-methylbut-2-enyl diphosphate reductase (316 aa).

Cys12 is a [4Fe-4S] cluster binding site. Residues His43 and His81 each contribute to the (2E)-4-hydroxy-3-methylbut-2-enyl diphosphate site. Dimethylallyl diphosphate is bound by residues His43 and His81. Positions 43 and 81 each coordinate isopentenyl diphosphate. Cys103 contacts [4Fe-4S] cluster. Position 131 (His131) interacts with (2E)-4-hydroxy-3-methylbut-2-enyl diphosphate. His131 lines the dimethylallyl diphosphate pocket. An isopentenyl diphosphate-binding site is contributed by His131. The active-site Proton donor is Glu133. Thr170 contacts (2E)-4-hydroxy-3-methylbut-2-enyl diphosphate. Cys198 is a [4Fe-4S] cluster binding site. 3 residues coordinate (2E)-4-hydroxy-3-methylbut-2-enyl diphosphate: Ser226, Asn228, and Ser271. Residues Ser226, Asn228, and Ser271 each contribute to the dimethylallyl diphosphate site. 3 residues coordinate isopentenyl diphosphate: Ser226, Asn228, and Ser271.

The protein belongs to the IspH family. Requires [4Fe-4S] cluster as cofactor.

The catalysed reaction is isopentenyl diphosphate + 2 oxidized [2Fe-2S]-[ferredoxin] + H2O = (2E)-4-hydroxy-3-methylbut-2-enyl diphosphate + 2 reduced [2Fe-2S]-[ferredoxin] + 2 H(+). It catalyses the reaction dimethylallyl diphosphate + 2 oxidized [2Fe-2S]-[ferredoxin] + H2O = (2E)-4-hydroxy-3-methylbut-2-enyl diphosphate + 2 reduced [2Fe-2S]-[ferredoxin] + 2 H(+). It participates in isoprenoid biosynthesis; dimethylallyl diphosphate biosynthesis; dimethylallyl diphosphate from (2E)-4-hydroxy-3-methylbutenyl diphosphate: step 1/1. The protein operates within isoprenoid biosynthesis; isopentenyl diphosphate biosynthesis via DXP pathway; isopentenyl diphosphate from 1-deoxy-D-xylulose 5-phosphate: step 6/6. Its function is as follows. Catalyzes the conversion of 1-hydroxy-2-methyl-2-(E)-butenyl 4-diphosphate (HMBPP) into a mixture of isopentenyl diphosphate (IPP) and dimethylallyl diphosphate (DMAPP). Acts in the terminal step of the DOXP/MEP pathway for isoprenoid precursor biosynthesis. This Geobacillus thermodenitrificans (strain NG80-2) protein is 4-hydroxy-3-methylbut-2-enyl diphosphate reductase.